We begin with the raw amino-acid sequence, 92 residues long: Small ribosomal subunit protein uS19 (92 aa).

This sequence belongs to the universal ribosomal protein uS19 family.

Functionally, protein S19 forms a complex with S13 that binds strongly to the 16S ribosomal RNA. This is Small ribosomal subunit protein uS19 from Azorhizobium caulinodans (strain ATCC 43989 / DSM 5975 / JCM 20966 / LMG 6465 / NBRC 14845 / NCIMB 13405 / ORS 571).